We begin with the raw amino-acid sequence, 426 residues long: D-tagatose-1,6-bisphosphate aldolase subunit KbaZ (426 aa).

Belongs to the GatZ/KbaZ family. KbaZ subfamily. In terms of assembly, forms a complex with KbaY.

Its pathway is carbohydrate metabolism; D-tagatose 6-phosphate degradation; D-glyceraldehyde 3-phosphate and glycerone phosphate from D-tagatose 6-phosphate: step 2/2. Its function is as follows. Component of the tagatose-1,6-bisphosphate aldolase KbaYZ that is required for full activity and stability of the Y subunit. Could have a chaperone-like function for the proper and stable folding of KbaY. When expressed alone, KbaZ does not show any aldolase activity. The sequence is that of D-tagatose-1,6-bisphosphate aldolase subunit KbaZ from Escherichia coli O1:K1 / APEC.